The primary structure comprises 289 residues: 4-diphosphocytidyl-2-C-methyl-D-erythritol kinase (289 aa).

Lys10 is a catalytic residue. Position 99–109 (Pro99–Ser109) interacts with ATP. Asp141 is an active-site residue.

Belongs to the GHMP kinase family. IspE subfamily. In terms of assembly, homodimer.

It catalyses the reaction 4-CDP-2-C-methyl-D-erythritol + ATP = 4-CDP-2-C-methyl-D-erythritol 2-phosphate + ADP + H(+). Its pathway is isoprenoid biosynthesis; isopentenyl diphosphate biosynthesis via DXP pathway; isopentenyl diphosphate from 1-deoxy-D-xylulose 5-phosphate: step 3/6. Its function is as follows. Catalyzes the phosphorylation of the position 2 hydroxy group of 4-diphosphocytidyl-2C-methyl-D-erythritol. This chain is 4-diphosphocytidyl-2-C-methyl-D-erythritol kinase, found in Enterobacter sp. (strain 638).